The sequence spans 393 residues: MDFYEQLREELKKLEDSGLLITIRTLESAQGAWININGKKVLNMCSNNYLGLANNERLKEAAINAIKNWGVGPGAVRTIAGTMKIHEELEKKLAEFKKVEATLVVQSGFNANQAVIPTITNEEDGILSDELNHASIIDGVRLSKAKRYIWKHKDLNSLEEQLVKAQRDNCRRKLIITDGVFSMDGDIAPLPGIVELAKKYDALVMVDDAHGEGVLGENGRGIADHFNLTEEVDIEIGTLSKAFGVVGGFIAGKKVLIDYLKQQARPFLFSSSLSPAETAAALEATKILYESDDLVKKLWDNAKYFQSKIKEMGYDIGGTETPITPVMIYDEKKTKEFSSKLYEEGIFASSIVYPTVPKGKARIRVMISALHSKEDLDFALSKFEKIGKSLGTL.

108–109 contributes to the pyridoxal 5'-phosphate binding site; sequence GF. A substrate-binding site is contributed by His133. Pyridoxal 5'-phosphate-binding positions include Ser182, 207–210, and 238–241; these read DDAH and TLSK. Lys241 bears the N6-(pyridoxal phosphate)lysine mark. Thr355 contacts substrate.

The protein belongs to the class-II pyridoxal-phosphate-dependent aminotransferase family. BioF subfamily. Homodimer. Requires pyridoxal 5'-phosphate as cofactor.

The catalysed reaction is 6-carboxyhexanoyl-[ACP] + L-alanine + H(+) = (8S)-8-amino-7-oxononanoate + holo-[ACP] + CO2. It functions in the pathway cofactor biosynthesis; biotin biosynthesis. Its function is as follows. Catalyzes the decarboxylative condensation of pimeloyl-[acyl-carrier protein] and L-alanine to produce 8-amino-7-oxononanoate (AON), [acyl-carrier protein], and carbon dioxide. This is 8-amino-7-oxononanoate synthase from Petrotoga mobilis (strain DSM 10674 / SJ95).